Reading from the N-terminus, the 520-residue chain is Nonsense-mediated mRNA decay factor SMG9 (520 aa).

Residues 1-143 (MSESGHSQPG…KGEKEGQRPT (143 aa)) form a disordered region. An N-acetylserine modification is found at Ser-2. Residues Ser-2, Ser-4, Ser-7, Ser-32, and Ser-53 each carry the phosphoserine modification. Residues 36–53 (GRERDYIAPWERERRDGS) show a composition bias toward basic and acidic residues. Positions 78 to 94 (QPPPPAAPAAPPAPAPL) are enriched in pro residues. The span at 109-121 (GPAATTSTSTPEG) shows a compositional bias: low complexity. Residues 122-133 (TAPPPPAAPVPP) are compositionally biased toward pro residues. At Ser-451 the chain carries Phosphoserine.

Belongs to the SMG9 family. As to quaternary structure, self-associates to form homodimers and forms heterodimers with SMG8; these assembly forms may represent SMG1C intermediate forms. Component of the SMG1C complex composed of SMG1, SMG8 and SMG9. Self-associates to form homodimers and forms heterodimers with SMG8; these assembly forms may represent SMG1C intermediate forms. Interacts with DHX34; the interaction is RNA-independent. Phosphorylated by SMG1.

Functionally, involved in nonsense-mediated decay (NMD) of mRNAs containing premature stop codons. Is recruited by release factors to stalled ribosomes together with SMG1 and SMG8 (forming the SMG1C protein kinase complex) and, in the SMG1C complex, is required for the efficient association between SMG1 and SMG8. Plays a role in brain, heart, and eye development. The chain is Nonsense-mediated mRNA decay factor SMG9 from Bos taurus (Bovine).